The primary structure comprises 139 residues: ATP synthase epsilon chain (139 aa).

Belongs to the ATPase epsilon chain family. As to quaternary structure, F-type ATPases have 2 components, CF(1) - the catalytic core - and CF(0) - the membrane proton channel. CF(1) has five subunits: alpha(3), beta(3), gamma(1), delta(1), epsilon(1). CF(0) has three main subunits: a, b and c.

It localises to the cell inner membrane. Its function is as follows. Produces ATP from ADP in the presence of a proton gradient across the membrane. The polypeptide is ATP synthase epsilon chain (Alcanivorax borkumensis (strain ATCC 700651 / DSM 11573 / NCIMB 13689 / SK2)).